The chain runs to 477 residues: Cysteine--tRNA ligase (477 aa).

C28 is a binding site for Zn(2+). Residues 30-40 carry the 'HIGH' region motif; the sequence is PTVYDYPHLGH. Zn(2+) is bound by residues C208, H233, and E237. The 'KMSKS' region signature appears at 265 to 269; sequence KMSKS. An ATP-binding site is contributed by K268.

Belongs to the class-I aminoacyl-tRNA synthetase family. Zn(2+) serves as cofactor.

Its subcellular location is the cytoplasm. The enzyme catalyses tRNA(Cys) + L-cysteine + ATP = L-cysteinyl-tRNA(Cys) + AMP + diphosphate. The polypeptide is Cysteine--tRNA ligase (Pyrococcus furiosus (strain ATCC 43587 / DSM 3638 / JCM 8422 / Vc1)).